Reading from the N-terminus, the 110-residue chain is Acylphosphatase (110 aa).

The region spanning 20–108 (RAHIFVRGKV…GEFNDFSILP (89 aa)) is the Acylphosphatase-like domain. Catalysis depends on residues R35 and N53.

The protein belongs to the acylphosphatase family.

It catalyses the reaction an acyl phosphate + H2O = a carboxylate + phosphate + H(+). In Pyrobaculum calidifontis (strain DSM 21063 / JCM 11548 / VA1), this protein is Acylphosphatase (acyP).